Here is a 473-residue protein sequence, read N- to C-terminus: ATP synthase subunit beta (473 aa).

158-165 is a binding site for ATP; the sequence is GGAGVGKT.

Belongs to the ATPase alpha/beta chains family. F-type ATPases have 2 components, CF(1) - the catalytic core - and CF(0) - the membrane proton channel. CF(1) has five subunits: alpha(3), beta(3), gamma(1), delta(1), epsilon(1). CF(0) has three main subunits: a(1), b(2) and c(9-12). The alpha and beta chains form an alternating ring which encloses part of the gamma chain. CF(1) is attached to CF(0) by a central stalk formed by the gamma and epsilon chains, while a peripheral stalk is formed by the delta and b chains.

It localises to the cell membrane. The catalysed reaction is ATP + H2O + 4 H(+)(in) = ADP + phosphate + 5 H(+)(out). Produces ATP from ADP in the presence of a proton gradient across the membrane. The catalytic sites are hosted primarily by the beta subunits. The sequence is that of ATP synthase subunit beta from Bacillus caldotenax.